Reading from the N-terminus, the 413-residue chain is Arginine biosynthesis bifunctional protein ArgJ (413 aa).

Positions 154, 180, 191, 277, 408, and 413 each coordinate substrate. The active-site Nucleophile is the T191.

It belongs to the ArgJ family. In terms of assembly, heterotetramer of two alpha and two beta chains.

It is found in the cytoplasm. The enzyme catalyses N(2)-acetyl-L-ornithine + L-glutamate = N-acetyl-L-glutamate + L-ornithine. The catalysed reaction is L-glutamate + acetyl-CoA = N-acetyl-L-glutamate + CoA + H(+). It functions in the pathway amino-acid biosynthesis; L-arginine biosynthesis; L-ornithine and N-acetyl-L-glutamate from L-glutamate and N(2)-acetyl-L-ornithine (cyclic): step 1/1. The protein operates within amino-acid biosynthesis; L-arginine biosynthesis; N(2)-acetyl-L-ornithine from L-glutamate: step 1/4. Its function is as follows. Catalyzes two activities which are involved in the cyclic version of arginine biosynthesis: the synthesis of N-acetylglutamate from glutamate and acetyl-CoA as the acetyl donor, and of ornithine by transacetylation between N(2)-acetylornithine and glutamate. This is Arginine biosynthesis bifunctional protein ArgJ from Synechocystis sp. (strain ATCC 27184 / PCC 6803 / Kazusa).